Reading from the N-terminus, the 343-residue chain is Glycerol-3-phosphate dehydrogenase [NAD(P)+] (343 aa).

Residues S15, F16, R36, and K110 each coordinate NADPH. The sn-glycerol 3-phosphate site is built by K110 and G138. An NADPH-binding site is contributed by A142. Sn-glycerol 3-phosphate contacts are provided by K193, D246, S256, R257, and N258. K193 (proton acceptor) is an active-site residue. An NADPH-binding site is contributed by R257. E283 is an NADPH binding site.

It belongs to the NAD-dependent glycerol-3-phosphate dehydrogenase family.

Its subcellular location is the cytoplasm. It carries out the reaction sn-glycerol 3-phosphate + NAD(+) = dihydroxyacetone phosphate + NADH + H(+). The catalysed reaction is sn-glycerol 3-phosphate + NADP(+) = dihydroxyacetone phosphate + NADPH + H(+). Its pathway is membrane lipid metabolism; glycerophospholipid metabolism. Its function is as follows. Catalyzes the reduction of the glycolytic intermediate dihydroxyacetone phosphate (DHAP) to sn-glycerol 3-phosphate (G3P), the key precursor for phospholipid synthesis. The polypeptide is Glycerol-3-phosphate dehydrogenase [NAD(P)+] (Alcanivorax borkumensis (strain ATCC 700651 / DSM 11573 / NCIMB 13689 / SK2)).